A 488-amino-acid chain; its full sequence is uncharacterized protein (488 aa).

Belongs to the protein kinase superfamily. ADCK protein kinase family.

This is an uncharacterized protein from Mycobacterium tuberculosis (strain CDC 1551 / Oshkosh).